Here is a 490-residue protein sequence, read N- to C-terminus: Cytochrome P450 71A19 (490 aa).

Residues 3–23 form a helical membrane-spanning segment; that stretch reads IILVTLCLTTLLALLLLKSIL. Cysteine 433 serves as a coordination point for heme.

It belongs to the cytochrome P450 family. The cofactor is heme.

It localises to the membrane. In Arabidopsis thaliana (Mouse-ear cress), this protein is Cytochrome P450 71A19 (CYP71A19).